Here is a 578-residue protein sequence, read N- to C-terminus: Rhamnogalacturonate lyase (578 aa).

Positions methionine 1–glycine 27 are cleaved as a signal peptide.

The protein belongs to the polysaccharide lyase 4 family.

It is found in the secreted. The enzyme catalyses Endotype eliminative cleavage of L-alpha-rhamnopyranosyl-(1-&gt;4)-alpha-D-galactopyranosyluronic acid bonds of rhamnogalacturonan I domains in ramified hairy regions of pectin leaving L-rhamnopyranose at the reducing end and 4-deoxy-4,5-unsaturated D-galactopyranosyluronic acid at the non-reducing end.. Its function is as follows. Degrades the rhamnogalacturonan I (RG-I) backbone of pectin. Is required for the full virulence of E.chrysanthemi strain 3937 as it is involved in rotting of plant tissue. This is Rhamnogalacturonate lyase (rhiE) from Dickeya dadantii (strain 3937) (Erwinia chrysanthemi (strain 3937)).